A 166-amino-acid chain; its full sequence is Ubiquitin-conjugating enzyme E2-18 kDa (166 aa).

The region spanning 5–165 (MALRRLMKEY…VRRLARKTLG (161 aa)) is the UBC core domain. The active-site Glycyl thioester intermediate is the cysteine 90. Cysteine 90 participates in a covalent cross-link: Glycyl cysteine thioester (Cys-Gly) (interchain with G-Cter in ubiquitin).

Belongs to the ubiquitin-conjugating enzyme family. In terms of processing, autoubiquitinated at Cys-90; undergoes 'Lys-48'-linked polyubiquitination, which leads to proteasome-dependent protein degradation.

It catalyses the reaction S-ubiquitinyl-[E1 ubiquitin-activating enzyme]-L-cysteine + [E2 ubiquitin-conjugating enzyme]-L-cysteine = [E1 ubiquitin-activating enzyme]-L-cysteine + S-ubiquitinyl-[E2 ubiquitin-conjugating enzyme]-L-cysteine.. Its pathway is protein modification; protein ubiquitination. Catalyzes the covalent attachment of ubiquitin to other proteins. Functions in degradation of misfolded or regulated proteins localized in the endoplasmic reticulum (ER) lumen or membrane via the ubiquitin-proteasome system. Cognate E2 conjugating enzyme for the doa10 ubiquitin ligase complex, which is part of the ERAD-C pathway responsible for the rapid degradation of membrane proteins with misfolded cytoplasmic domains, and of the hrd1 ubiquitin ligase complex, which is part of the ERAD-L and ERAD-M pathways responsible for the rapid degradation of soluble lumenal and membrane proteins with misfolded lumenal domains (ERAD-L), or ER-membrane proteins with misfolded transmembrane domains (ERAD-M). Together with hrd1, required for the degradation of the transcription factor sre1 precursor in the absence of its binding partner scp1. Has a role in the formation of chromatin structures that influence the localization of transcriptional silencing factors. The chain is Ubiquitin-conjugating enzyme E2-18 kDa (ubc7) from Schizosaccharomyces pombe (strain 972 / ATCC 24843) (Fission yeast).